A 147-amino-acid polypeptide reads, in one-letter code: 3-dehydroquinate dehydratase (147 aa).

Y25 acts as the Proton acceptor in catalysis. Positions 76, 82, and 89 each coordinate substrate. H102 serves as the catalytic Proton donor. Residues 103–104 and R113 each bind substrate; that span reads IS.

The protein belongs to the type-II 3-dehydroquinase family. In terms of assembly, homododecamer.

It catalyses the reaction 3-dehydroquinate = 3-dehydroshikimate + H2O. Its pathway is metabolic intermediate biosynthesis; chorismate biosynthesis; chorismate from D-erythrose 4-phosphate and phosphoenolpyruvate: step 3/7. Its function is as follows. Catalyzes a trans-dehydration via an enolate intermediate. The polypeptide is 3-dehydroquinate dehydratase (Mycobacterium tuberculosis (strain ATCC 25177 / H37Ra)).